Reading from the N-terminus, the 173-residue chain is SPbeta prophage-derived putative HNH homing endonuclease YosQ (173 aa).

Its function is as follows. A possible homing endonuclease, it is entirely encoded within the YosP intron. The sequence is that of SPbeta prophage-derived putative HNH homing endonuclease YosQ (yosQ) from Bacillus subtilis (strain 168).